The primary structure comprises 398 residues: Succinate--CoA ligase [ADP-forming] subunit beta (398 aa).

Residues 9–254 enclose the ATP-grasp domain; that stretch reads KALLHEFGVP…ETEEDAKEIE (246 aa). Residues Lys46, 53–55, Glu109, Ser112, and Glu117 each bind ATP; that span reads GRG. Mg(2+) is bound by residues Asn209 and Asp223. Substrate-binding positions include Asn274 and 331–333; that span reads GIM.

This sequence belongs to the succinate/malate CoA ligase beta subunit family. Heterotetramer of two alpha and two beta subunits. Mg(2+) serves as cofactor.

It catalyses the reaction succinate + ATP + CoA = succinyl-CoA + ADP + phosphate. It carries out the reaction GTP + succinate + CoA = succinyl-CoA + GDP + phosphate. It participates in carbohydrate metabolism; tricarboxylic acid cycle; succinate from succinyl-CoA (ligase route): step 1/1. Functionally, succinyl-CoA synthetase functions in the citric acid cycle (TCA), coupling the hydrolysis of succinyl-CoA to the synthesis of either ATP or GTP and thus represents the only step of substrate-level phosphorylation in the TCA. The beta subunit provides nucleotide specificity of the enzyme and binds the substrate succinate, while the binding sites for coenzyme A and phosphate are found in the alpha subunit. This chain is Succinate--CoA ligase [ADP-forming] subunit beta, found in Bradyrhizobium sp. (strain ORS 278).